Consider the following 758-residue polypeptide: Actin filament-associated protein 1-like 1 (758 aa).

The segment at 91 to 194 (YRDSSENLSC…YESYDEEDEE (104 aa)) is disordered. A compositionally biased stretch (pro residues) spans 102–120 (LPPPPSAPPPPLPTTPPPE). Polar residues predominate over residues 137 to 148 (YITSRNSSSPPN). The segment covering 177 to 186 (ESDGLSSSYE) has biased composition (low complexity). A PH 1 domain is found at 216 to 312 (DSRICAFLLR…WLRVIKEVIS (97 aa)). Residues 335 to 369 (SHDKTSDSDSAANGENSSLSSGKENRDTGKCRKGG) form a disordered region. Polar residues predominate over residues 342–356 (SDSAANGENSSLSSG). Residues 409–503 (EVPCCGYLSV…WLGLLLAQTG (95 aa)) form the PH 2 domain. Residues 602–690 (KTRAEEDARK…TEVKENLKKS (89 aa)) are a coiled coil. Residues 692 to 758 (AGGPTLGLAV…KAKEWEKKKP (67 aa)) are disordered. Positions 749–758 (KAKEWEKKKP) are enriched in basic and acidic residues.

It is found in the cytoplasm. The protein resides in the cell projection. It localises to the podosome. Its subcellular location is the invadopodium. The protein localises to the cytoskeleton. It is found in the stress fiber. Its function is as follows. May be involved in podosome and invadosome formation. This Xenopus tropicalis (Western clawed frog) protein is Actin filament-associated protein 1-like 1 (afap1l1).